The sequence spans 72 residues: uncharacterized protein (72 aa).

Positions 1-38 (MSIFSSLSSLSTGSLKSSVSSIENGSSSGSFGSNETSG) are enriched in low complexity. A disordered region spans residues 1 to 42 (MSIFSSLSSLSTGSLKSSVSSIENGSSSGSFGSNETSGWGQH).

This is an uncharacterized protein from Dictyostelium discoideum (Social amoeba).